The chain runs to 408 residues: NADH-quinone oxidoreductase subunit D (408 aa).

This sequence belongs to the complex I 49 kDa subunit family. In terms of assembly, NDH-1 is composed of 14 different subunits. Subunits NuoB, C, D, E, F, and G constitute the peripheral sector of the complex.

Its subcellular location is the cell inner membrane. It catalyses the reaction a quinone + NADH + 5 H(+)(in) = a quinol + NAD(+) + 4 H(+)(out). In terms of biological role, NDH-1 shuttles electrons from NADH, via FMN and iron-sulfur (Fe-S) centers, to quinones in the respiratory chain. The immediate electron acceptor for the enzyme in this species is believed to be ubiquinone. Couples the redox reaction to proton translocation (for every two electrons transferred, four hydrogen ions are translocated across the cytoplasmic membrane), and thus conserves the redox energy in a proton gradient. In Campylobacter jejuni subsp. jejuni serotype O:23/36 (strain 81-176), this protein is NADH-quinone oxidoreductase subunit D.